The chain runs to 360 residues: tRNA-specific 2-thiouridylase MnmA (360 aa).

ATP contacts are provided by residues 8-15 and Met-34; that span reads GMSGGVDS. The segment at 94–96 is interaction with target base in tRNA; it reads NPD. The active-site Nucleophile is the Cys-99. Cys-99 and Cys-195 are oxidised to a cystine. ATP is bound at residue Gly-123. The segment at 145–147 is interaction with tRNA; sequence KDQ. Residue Cys-195 is the Cysteine persulfide intermediate of the active site. The interval 307 to 308 is interaction with tRNA; it reads RY.

It belongs to the MnmA/TRMU family.

The protein localises to the cytoplasm. The catalysed reaction is S-sulfanyl-L-cysteinyl-[protein] + uridine(34) in tRNA + AH2 + ATP = 2-thiouridine(34) in tRNA + L-cysteinyl-[protein] + A + AMP + diphosphate + H(+). Functionally, catalyzes the 2-thiolation of uridine at the wobble position (U34) of tRNA, leading to the formation of s(2)U34. In Methylobacillus flagellatus (strain ATCC 51484 / DSM 6875 / VKM B-1610 / KT), this protein is tRNA-specific 2-thiouridylase MnmA.